Reading from the N-terminus, the 430-residue chain is S-adenosylmethionine synthase (430 aa).

Residue His-14 coordinates ATP. Asp-16 contacts Mg(2+). Glu-42 serves as a coordination point for K(+). L-methionine contacts are provided by Glu-55 and Gln-98. A flexible loop region spans residues Gln-98–Arg-108. ATP contacts are provided by residues Asp-164–Lys-166, Lys-254–Phe-255, Asp-263, Arg-269–Lys-270, Ala-286, and Lys-290. Asp-263 is a binding site for L-methionine. L-methionine is bound at residue Lys-294.

Belongs to the AdoMet synthase family. In terms of assembly, homotetramer; dimer of dimers. Mg(2+) is required as a cofactor. The cofactor is K(+).

It is found in the cytoplasm. The catalysed reaction is L-methionine + ATP + H2O = S-adenosyl-L-methionine + phosphate + diphosphate. Its pathway is amino-acid biosynthesis; S-adenosyl-L-methionine biosynthesis; S-adenosyl-L-methionine from L-methionine: step 1/1. Catalyzes the formation of S-adenosylmethionine (AdoMet) from methionine and ATP. The overall synthetic reaction is composed of two sequential steps, AdoMet formation and the subsequent tripolyphosphate hydrolysis which occurs prior to release of AdoMet from the enzyme. The protein is S-adenosylmethionine synthase of Bacteroides thetaiotaomicron (strain ATCC 29148 / DSM 2079 / JCM 5827 / CCUG 10774 / NCTC 10582 / VPI-5482 / E50).